We begin with the raw amino-acid sequence, 282 residues long: Glutamyl endopeptidase (282 aa).

Residues 1–27 form the signal peptide; sequence MKKRFLSICTMTIAALATTTMVNTSYA. A propeptide spanning residues 28–66 is cleaved from the precursor; that stretch reads KTDTESHNHSSLGTENKNVLDINSSSHNIKPSQNKSYPS. Residues H117, D159, and S235 each act as charge relay system in the active site.

The protein belongs to the peptidase S1B family.

It localises to the secreted. The enzyme catalyses Preferential cleavage: Glu-|-Xaa, Asp-|-Xaa.. Functionally, exhibits a significant hydrolytic activity for the carbonyl side of glutamic acid. Shows activity toward human fibronectin and type 1 collagen. The sequence is that of Glutamyl endopeptidase (gseA) from Staphylococcus epidermidis (strain ATCC 35984 / DSM 28319 / BCRC 17069 / CCUG 31568 / BM 3577 / RP62A).